A 306-amino-acid chain; its full sequence is Proline-rich transmembrane protein 1 (306 aa).

Residues 1-142 (MSSEKSGLPD…PPPAPAQTAQ (142 aa)) are disordered. Residues 1 to 223 (MSSEKSGLPD…LEPRRPPHDY (223 aa)) lie on the Cytoplasmic side of the membrane. The span at 15-36 (TSPPPYNAPQPPAEPPAPPPQA) shows a compositional bias: pro residues. Basic residues predominate over residues 40–49 (SHHHHHHHYH). 2 stretches are compositionally biased toward pro residues: residues 87–111 (HAPPGPAAGAPPPGCATLPRMPPDP) and 121–137 (PLPPPPPAAAAPPPPAP). A helical membrane pass occupies residues 224–244 (MPIAVLTTICCFWPTGIIAIF). Residues 245–275 (KAVQVRTALARGDMVSAEIASREARNFSFIS) lie on the Extracellular side of the membrane. Residues 276-296 (LAVGIAAMVLCTILTVVIIIA) constitute an intramembrane region (helical). The Extracellular portion of the chain corresponds to 297 to 306 (AQHHENYWDP).

Belongs to the CD225/Dispanin family. As to quaternary structure, component of the outer core of AMPAR complex. AMPAR complex consists of an inner core made of 4 pore-forming GluA/GRIA proteins (GRIA1, GRIA2, GRIA3 and GRIA4) and 4 major auxiliary subunits arranged in a twofold symmetry. One of the two pairs of distinct binding sites is occupied either by CNIH2, CNIH3 or CACNG2, CACNG3. The other harbors CACNG2, CACNG3, CACNG4, CACNG8 or GSG1L. This inner core of AMPAR complex is complemented by outer core constituents binding directly to the GluA/GRIA proteins at sites distinct from the interaction sites of the inner core constituents. Outer core constituents include at least PRRT1, PRRT2, CKAMP44/SHISA9, FRRS1L and NRN1. The proteins of the inner and outer core serve as a platform for other, more peripherally associated AMPAR constituents. Alone or in combination, these auxiliary subunits control the gating and pharmacology of the AMPAR complex and profoundly impact their biogenesis and protein processing.

The protein localises to the cell membrane. It is found in the synapse. Required to maintain a pool of extrasynaptic AMPA-regulated glutamate receptors (AMPAR) which is necessary for synapse development and function. Regulates basal AMPAR function and synaptic transmission during development but is dispensable at mature hippocampal synapses. Plays a role in regulating basal phosphorylation levels of glutamate receptor GRIA1 and promotes GRIA1 and GRIA2 cell surface expression. This is Proline-rich transmembrane protein 1 from Homo sapiens (Human).